A 500-amino-acid chain; its full sequence is Cobyric acid synthase (500 aa).

A GATase cobBQ-type domain is found at 251-449 (KLNIVIPIMP…LHGVFDHPDA (199 aa)). The active-site Nucleophile is the Cys332. His441 is an active-site residue.

This sequence belongs to the CobB/CobQ family. CobQ subfamily.

It functions in the pathway cofactor biosynthesis; adenosylcobalamin biosynthesis. Its function is as follows. Catalyzes amidations at positions B, D, E, and G on adenosylcobyrinic A,C-diamide. NH(2) groups are provided by glutamine, and one molecule of ATP is hydrogenolyzed for each amidation. The polypeptide is Cobyric acid synthase (Marinomonas sp. (strain MWYL1)).